The primary structure comprises 697 residues: Long-chain-fatty-acid--CoA ligase 6 (697 aa).

The chain crosses the membrane as a helical; Signal-anchor for type III membrane protein span at residues Leu-25–Thr-45. Topologically, residues His-46–Met-697 are cytoplasmic.

This sequence belongs to the ATP-dependent AMP-binding enzyme family. Mg(2+) is required as a cofactor. In terms of tissue distribution, expressed predominantly in erythrocyte precursors, in particular in reticulocytes, fetal blood cells derived from fetal liver, hemopoietic stem cells from cord blood, bone marrow and brain.

It is found in the mitochondrion outer membrane. Its subcellular location is the peroxisome membrane. It localises to the microsome membrane. The protein resides in the endoplasmic reticulum membrane. It catalyses the reaction a long-chain fatty acid + ATP + CoA = a long-chain fatty acyl-CoA + AMP + diphosphate. The catalysed reaction is (5Z,8Z,11Z,14Z)-eicosatetraenoate + ATP + CoA = (5Z,8Z,11Z,14Z)-eicosatetraenoyl-CoA + AMP + diphosphate. It carries out the reaction hexadecanoate + ATP + CoA = hexadecanoyl-CoA + AMP + diphosphate. The enzyme catalyses (E)-hexadec-2-enoate + ATP + CoA = (2E)-hexadecenoyl-CoA + AMP + diphosphate. It catalyses the reaction 15-hydroxy-(5Z,8Z,11Z,13E)-eicosatetraenoate + ATP + CoA = 15-hydroxy-(5Z,8Z,11Z,13E)-eicosatetraenoyl-CoA + AMP + diphosphate. The catalysed reaction is 12-hydroxy-(5Z,8Z,10E,14Z)-eicosatetraenoate + ATP + CoA = 12-hydroxy-(5Z,8Z,10E,14Z)-eicosatetraenoyl-CoA + AMP + diphosphate. It carries out the reaction 5-hydroxy-(6E,8Z,11Z,14Z)-eicosatetraenoate + ATP + CoA = 5-hydroxy-(6E,8Z,11Z,14Z)-eicosatetraenoyl-CoA + AMP + diphosphate. In terms of biological role, catalyzes the conversion of long-chain fatty acids to their active form acyl-CoA for both synthesis of cellular lipids, and degradation via beta-oxidation. Plays an important role in fatty acid metabolism in brain and the acyl-CoAs produced may be utilized exclusively for the synthesis of the brain lipid. The protein is Long-chain-fatty-acid--CoA ligase 6 of Homo sapiens (Human).